The following is a 343-amino-acid chain: MSCLPEPTVLTQLWVDNPPRYSQAQLQDYLKVIKLPQRFLNSAVLKDSSLAHTKEHGLPLLKAITRYHACNVPFENLELHYSAHKTITLDPVELFEKIVTRRRGGRCMENNTFLGTVFRSFGYEVRDCGGRVARAMSPYPDVRKNQAYTYDGWNHMLNLVYLEDEWYVVDVGMGSMGPNLPFPLRHGFETMSIAPRKIRLQRRPIAESHASNPTKGTELWCYDVCLKPTKDGTEVWIPTYAFTETEFLPQDYEVMSWFTSTNPRSFFTRYVTCTKMIQDEEKEEIIGNLTLFKDTIRETIGNQRKVVRECKTEEERIQALVEIFDVNLTDEEKNGLPEERRLA.

The Acyl-thioester intermediate role is filled by C107. The active-site Proton acceptor is H155. D170 is an active-site residue.

The protein belongs to the arylamine N-acetyltransferase family.

It functions in the pathway xenobiotic degradation. N-malonyltransferase; part of the Fusarium detoxification of benzoxazolinone cluster involved in the degradation of benzoxazolinones produced by the host plant. Maize, wheat, and rye produce the 2 benzoxazinone phytoanticipins 2,4-dihy-droxy-7-methoxy-1,4-benzoxazin-3-one (DIMBOA) and 2,4-dihydroxy-1,4-benzoxazin-3-one (DIBOA) that, due to their inherent instability once released, spontaneously degrade to the more stable corresponding benzoxazolinones, 6-methoxy-2-benzoxazolinone (MBOA) and 2-benzoxazolinone (BOA), respectively. The first step in the detoxification of benzoxazolinones involves the hydrolysis of the cyclic ester bond of benzoxazolinones by the gamma-lactamase FDB1 to aminophenols. FDB1 is able to convert BOA into 2-aminophenol (2-AP), as well as MBOA into 5-methoxy-2-aminophenol (2-AMP). The N-malonyltransferase FDB2 then metabolizes aminophenols via N-malonylation to non-toxic malonamic acids. FDB2 converts 2-AP into N-(2-hydroxyphenyl) malonamic acid (HPMA) and 2-AMP into N-(2-hydroxy-4-methoxyphenyl) malonamic acid (HMPMA). The cluster also contains 2 transcription factors (FDB3 and FPSE_08121), an aldo-keto reductase (FPSE_08125) that possibly associates with a ketone component of BOA and MBOA degradation, an esterase (FPSE_08126), an acyl-CoA transferase (FPSE_08120), a solute carrier protein (FPSE_08119) and a transmembrane transporter (FPSE_08127) proposed to shuttle metabolites of benzoxazolinone degradation. In Fusarium pseudograminearum (strain CS3096) (Wheat and barley crown-rot fungus), this protein is N-malonyltransferase FDB2.